Here is a 566-residue protein sequence, read N- to C-terminus: MIVKRPVSASLARAFFYIVLLSILSTGIALLTLASSLRDAEAINIAGSLRMQSYRLGYDLQSGSPQLNAHRQLFQQALHSPVLTNLNVWYVPEAVKTRYAHLNANWLEMNNRLSKGDLPWYQANINNYVNQIDLFVLALQHYAERKMLLVVAISLAGGIGIFTLVFFTLRRIRHQVVAPLNQLVTASQRIEHGQFDSPPLDTNLPNELGLLAKTFNQMSSELHKLYRSLEASVEEKTRDLHEAKRRLEVLYQCSQALNTSQIDVHCFRHILQIVRDNEAAEYLELNVGENWRISEGQPNPELPMQILPVTMQETVYGELHWQNSHVSSSEPLLNSVSSMLGRGLYFNQAQKHFQQLLLMEERATIARELHDSLAQVLSYLRIQLTLLKRSIPEDNATAQSIMADFSQALNDAYRQLRELLTTFRLTLQQADLPSALREMLDTLQNQTSAKLTLDCRLPTLALDAQMQVHLLQIIREAVLNAMKHANASEIAVSCVTAPDGNHTVYIRDNGIGIGEPKEPEGHYGLNIMRERAERLGGTLTFSQPSGGGTLVSISFRSAEGEESQLM.

The Cytoplasmic segment spans residues 1 to 13 (MIVKRPVSASLAR). The chain crosses the membrane as a helical span at residues 14–34 (AFFYIVLLSILSTGIALLTLA). Residues 35-146 (SSLRDAEAIN…LALQHYAERK (112 aa)) lie on the Periplasmic side of the membrane. A helical membrane pass occupies residues 147 to 167 (MLLVVAISLAGGIGIFTLVFF). The Cytoplasmic segment spans residues 168–566 (TLRRIRHQVV…SAEGEESQLM (399 aa)). The HAMP domain maps to 174–227 (HQVVAPLNQLVTASQRIEHGQFDSPPLDTNLPNELGLLAKTFNQMSSELHKLYR). Residues 364–559 (TIARELHDSL…LVSISFRSAE (196 aa)) enclose the Histidine kinase domain. The residue at position 370 (His-370) is a Phosphohistidine; by autocatalysis.

It is found in the cell inner membrane. It carries out the reaction ATP + protein L-histidine = ADP + protein N-phospho-L-histidine.. Acts as a sensor for nitrate/nitrite and transduces signal of nitrate/nitrite availability to the NarL/NarP proteins. NarQ probably activates NarL and NarP by phosphorylation. NarQ probably negatively regulates the NarL protein by dephosphorylation. The protein is Nitrate/nitrite sensor protein NarQ (narQ) of Escherichia coli (strain K12).